The sequence spans 1297 residues: Insulin receptor-related protein (1297 aa).

The first 26 residues, 1 to 26 (MAVPSLWPWGACLPVIFLSLGFGLDT), serve as a signal peptide directing secretion. A glycan (N-linked (GlcNAc...) asparagine) is linked at Asn-47. 9 disulfides stabilise this stretch: Cys-214–Cys-222, Cys-216–Cys-228, Cys-229–Cys-237, Cys-233–Cys-246, Cys-249–Cys-258, Cys-262–Cys-274, Cys-280–Cys-300, Cys-304–Cys-317, and Cys-320–Cys-324. An N-linked (GlcNAc...) asparagine glycan is attached at Asn-311. Residues Asn-411, Asn-492, Asn-528, Asn-616, and Asn-634 are each glycosylated (N-linked (GlcNAc...) asparagine). Fibronectin type-III domains follow at residues 483-603 (QTRT…TLPA) and 607-707 (VPQD…AQEA). Cys-657 and Cys-864 form a disulfide bridge. Disordered stretches follow at residues 666 to 687 (SNND…ESDC) and 732 to 758 (SINK…GNSS). Residues 675-685 (EDGDPEAEMES) show a composition bias toward acidic residues. The Extracellular portion of the chain corresponds to 747–921 (AAGPLRLGGN…PEEEDAGGLH (175 aa)). N-linked (GlcNAc...) asparagine glycans are attached at residues Asn-756, Asn-885, and Asn-898. The 96-residue stretch at 818–913 (IPGKVAWEAS…SVAFYILGPE (96 aa)) folds into the Fibronectin type-III 3 domain. Residues 922–943 (VLLTATPVGLTLLIVLAALGFF) form a helical membrane-spanning segment. The Cytoplasmic portion of the chain corresponds to 944 to 1297 (YGKKRNRTLY…CSPQNGGPGH (354 aa)). The 276-residue stretch at 979 to 1254 (ISIIRELGQG…SIQEELRPSF (276 aa)) folds into the Protein kinase domain. ATP-binding positions include 985 to 993 (LGQGSFGMV) and Lys-1013. Catalysis depends on Asp-1115, which acts as the Proton acceptor. Phosphotyrosine; by autocatalysis is present on residues Tyr-1145 and Tyr-1146. A disordered region spans residues 1267-1297 (GARGSLPTTDAEPDSSPTPRDCSPQNGGPGH). Positions 1281-1297 (SSPTPRDCSPQNGGPGH) are enriched in polar residues.

It belongs to the protein kinase superfamily. Tyr protein kinase family. Insulin receptor subfamily. In terms of assembly, probable tetramer of 2 alpha and 2 beta chains linked by disulfide bonds. The alpha chains contribute to the formation of the ligand-binding domain, while the beta chains carry the kinase domain. In terms of processing, autophosphorylated on tyrosine residues between pH 7.9 and pH 10.5.

Its subcellular location is the membrane. It carries out the reaction L-tyrosyl-[protein] + ATP = O-phospho-L-tyrosyl-[protein] + ADP + H(+). Its function is as follows. Receptor with tyrosine-protein kinase activity. Functions as a pH sensing receptor which is activated by increased extracellular pH. Activates an intracellular signaling pathway that involves IRS1 and AKT1/PKB. This Homo sapiens (Human) protein is Insulin receptor-related protein (INSRR).